Reading from the N-terminus, the 316-residue chain is Protoheme IX farnesyltransferase (316 aa).

9 helical membrane-spanning segments follow: residues 32–52 (VMSL…GQIN), 53–73 (PVLG…SGAL), 93–113 (IPAG…LSCF), 116–136 (AILG…TIFF), 152–172 (NIVI…ACVT), 180–200 (TVLF…LALF), 226–246 (IVAY…LGFA), 248–268 (FAYG…SIAV), and 289–309 (IFYL…AMLV).

The protein belongs to the UbiA prenyltransferase family. Protoheme IX farnesyltransferase subfamily.

The protein localises to the cell inner membrane. It catalyses the reaction heme b + (2E,6E)-farnesyl diphosphate + H2O = Fe(II)-heme o + diphosphate. The protein operates within porphyrin-containing compound metabolism; heme O biosynthesis; heme O from protoheme: step 1/1. Its function is as follows. Converts heme B (protoheme IX) to heme O by substitution of the vinyl group on carbon 2 of heme B porphyrin ring with a hydroxyethyl farnesyl side group. The polypeptide is Protoheme IX farnesyltransferase (Rhizobium etli (strain CIAT 652)).